Reading from the N-terminus, the 336-residue chain is MTSPILDRDRLSQQLQDLQAKALQAIATASTLDALEQLRVAYLGKKGELSQILALMGKLPAGDRPTIGTLANTLKEKLLQELEARRATLQAEKIAAQLAAESLDVTMPGVYRPQGHIHPLHSTIDRILDIFVGLGYTVANGPEMETEYYNFEALNTPADHPARDMQDTFYLPDGNLLRTHTSSVQIRYMELYEPPIRIVAPGRCYRRDTEDATHAAVFHQIEILAVDEGLTFTDLKGTVTTFLAELFGDVPIRFRASYFPFTEPSAEVDVQWQGRWLEVMGCGMVDPAVLKNVGYDPEVYTGFAAGFGVERFAMVLHQIDDIRRFYTSDLRFLRQF.

Glu-263 is a binding site for Mg(2+).

This sequence belongs to the class-II aminoacyl-tRNA synthetase family. Phe-tRNA synthetase alpha subunit type 1 subfamily. In terms of assembly, tetramer of two alpha and two beta subunits. Mg(2+) is required as a cofactor.

It localises to the cytoplasm. The enzyme catalyses tRNA(Phe) + L-phenylalanine + ATP = L-phenylalanyl-tRNA(Phe) + AMP + diphosphate + H(+). The protein is Phenylalanine--tRNA ligase alpha subunit of Thermosynechococcus vestitus (strain NIES-2133 / IAM M-273 / BP-1).